Consider the following 296-residue polypeptide: Polyamine aminopropyltransferase (296 aa).

Residues 16 to 251 form the PABS domain; the sequence is HLWYFEYYTG…GMWSYTFASK (236 aa). Gln-46 lines the S-methyl-5'-thioadenosine pocket. 2 residues coordinate spermidine: His-77 and Asp-101. Residues Glu-121 and 152-153 contribute to the S-methyl-5'-thioadenosine site; that span reads NG. Asp-170 serves as the catalytic Proton acceptor. 170–173 is a spermidine binding site; the sequence is DSTD.

The protein belongs to the spermidine/spermine synthase family. As to quaternary structure, homotetramer.

Its subcellular location is the cytoplasm. The catalysed reaction is S-adenosyl 3-(methylsulfanyl)propylamine + putrescine = S-methyl-5'-thioadenosine + spermidine + H(+). It participates in amine and polyamine biosynthesis; spermidine biosynthesis; spermidine from putrescine: step 1/1. Strongly inhibited by S-adenosyl-1,8-diamino-3-thiooctane. Catalyzes the irreversible transfer of a propylamine group from the amino donor S-adenosylmethioninamine (decarboxy-AdoMet) to putrescine (1,4-diaminobutane) to yield spermidine. It has lower affinity and lower activity towards 1,3-diaminopropane, cadaverine (1,5-diaminopentane), agmatine, norspermidine and spermidine (in vitro). In Thermotoga maritima (strain ATCC 43589 / DSM 3109 / JCM 10099 / NBRC 100826 / MSB8), this protein is Polyamine aminopropyltransferase.